The sequence spans 316 residues: Aspartate carbamoyltransferase catalytic subunit (316 aa).

Positions 59 and 60 each coordinate carbamoyl phosphate. Lys88 serves as a coordination point for L-aspartate. Carbamoyl phosphate contacts are provided by Arg109, His137, and Gln140. Positions 170 and 232 each coordinate L-aspartate. Carbamoyl phosphate-binding residues include Leu269 and Pro270.

This sequence belongs to the aspartate/ornithine carbamoyltransferase superfamily. ATCase family. As to quaternary structure, heterooligomer of catalytic and regulatory chains.

It carries out the reaction carbamoyl phosphate + L-aspartate = N-carbamoyl-L-aspartate + phosphate + H(+). The protein operates within pyrimidine metabolism; UMP biosynthesis via de novo pathway; (S)-dihydroorotate from bicarbonate: step 2/3. Catalyzes the condensation of carbamoyl phosphate and aspartate to form carbamoyl aspartate and inorganic phosphate, the committed step in the de novo pyrimidine nucleotide biosynthesis pathway. This is Aspartate carbamoyltransferase catalytic subunit from Methanobrevibacter smithii (strain ATCC 35061 / DSM 861 / OCM 144 / PS).